The following is a 213-amino-acid chain: Thymidylate kinase (213 aa).

ATP is bound at residue 10-17 (GLEGAGKT).

The protein belongs to the thymidylate kinase family.

The catalysed reaction is dTMP + ATP = dTDP + ADP. Phosphorylation of dTMP to form dTDP in both de novo and salvage pathways of dTTP synthesis. This is Thymidylate kinase from Shigella boydii serotype 18 (strain CDC 3083-94 / BS512).